A 512-amino-acid chain; its full sequence is Secreted triacylglycerol lipase LIP5 (512 aa).

The first 17 residues, 1-17 (MMYASLVHWLALAVALA), serve as a signal peptide directing secretion. Cysteine 118 and cysteine 292 are joined by a disulfide. Serine 203 serves as the catalytic Nucleophile. The N-linked (GlcNAc...) asparagine glycan is linked to asparagine 316. Aspartate 352 is an active-site residue. Asparagine 361 carries N-linked (GlcNAc...) asparagine glycosylation. Residue histidine 386 is part of the active site. The N-linked (GlcNAc...) asparagine glycan is linked to asparagine 453. The disordered stretch occupies residues 480–512 (KGDISPGEGGDHTKESKKAAAKFKAEKKHGKHH). A compositionally biased stretch (basic and acidic residues) spans 488–497 (GGDHTKESKK). Residues 498-512 (AAAKFKAEKKHGKHH) are compositionally biased toward basic residues.

This sequence belongs to the AB hydrolase superfamily. Lipase family. Class Lip subfamily.

The protein localises to the secreted. It carries out the reaction a triacylglycerol + H2O = a diacylglycerol + a fatty acid + H(+). The catalysed reaction is a monoacylglycerol + H2O = glycerol + a fatty acid + H(+). The enzyme catalyses a diacylglycerol + H2O = a monoacylglycerol + a fatty acid + H(+). Functionally, secreted lipase that hydrolyzes acylglycerol lipids such as triacylglycerols and consequently releases free fatty acid. Can hydrolyze 4-nitrophenyl palmitate to release 4-nitrophenol and palmitoic acid. Due to an absence of fatty acid synthase genes in Malassezia species, secretory lipases are essential for the yeast to generate free fatty acids from degradation of sebum and assimilate them as lipid sources for growth. Plays an essential role at the pathogen-host interface during disease progression. The sequence is that of Secreted triacylglycerol lipase LIP5 from Malassezia restricta (strain ATCC 96810 / NBRC 103918 / CBS 7877) (Seborrheic dermatitis infection agent).